The following is a 317-amino-acid chain: ADP-L-glycero-D-manno-heptose-6-epimerase (317 aa).

Residues 10–11 (FI), 31–32 (DD), Lys-38, Lys-53, 75–79 (QGACS), and Asn-92 contribute to the NADP(+) site. Tyr-139 acts as the Proton acceptor in catalysis. Lys-143 contacts NADP(+). Asn-166 serves as a coordination point for substrate. Positions 167 and 175 each coordinate NADP(+). Lys-175 serves as the catalytic Proton acceptor. Residues Gly-177, His-184, 198–201 (FQGH), Arg-211, and Tyr-275 contribute to the substrate site.

This sequence belongs to the NAD(P)-dependent epimerase/dehydratase family. HldD subfamily. Homopentamer. NADP(+) is required as a cofactor.

It carries out the reaction ADP-D-glycero-beta-D-manno-heptose = ADP-L-glycero-beta-D-manno-heptose. The protein operates within nucleotide-sugar biosynthesis; ADP-L-glycero-beta-D-manno-heptose biosynthesis; ADP-L-glycero-beta-D-manno-heptose from D-glycero-beta-D-manno-heptose 7-phosphate: step 4/4. In terms of biological role, catalyzes the interconversion between ADP-D-glycero-beta-D-manno-heptose and ADP-L-glycero-beta-D-manno-heptose via an epimerization at carbon 6 of the heptose. The sequence is that of ADP-L-glycero-D-manno-heptose-6-epimerase from Shewanella loihica (strain ATCC BAA-1088 / PV-4).